Consider the following 474-residue polypeptide: Uronate isomerase (474 aa).

This sequence belongs to the metallo-dependent hydrolases superfamily. Uronate isomerase family.

The enzyme catalyses D-glucuronate = D-fructuronate. It carries out the reaction aldehydo-D-galacturonate = keto-D-tagaturonate. Its pathway is carbohydrate metabolism; pentose and glucuronate interconversion. This is Uronate isomerase from Photorhabdus laumondii subsp. laumondii (strain DSM 15139 / CIP 105565 / TT01) (Photorhabdus luminescens subsp. laumondii).